The primary structure comprises 121 residues: MAILTDENYVDKAERAISLLEKDNKGNYLLTTSQIRKLLSLCSSLYDRSKERKFDELINDVSYLRVQFVYQAGREIAVKDLIEKAQILEALKEIKDRETLQRFCRYMEALVAYFKFYGGKD.

It belongs to the CRISPR-associated Csm2 family. As to quaternary structure, part of the Csm effector complex that includes at least Cas10(1), Csm2(3), Csm3(5), Csm4(1), Csm5(1) and mature crRNA. The Csm complex is elongated and slightly twisted with a maximal length of 215 Angstroms and a diameter of 75-80 Angstroms. It has been modeled to have a central protein filamant of Csm3 subunits along which the dsRNA helix of paired crRNA and target RNA binds. The filament is capped at one end by Cas10 and Csm4 and at the other end by Csm5; ssDNA is thought to bind to the N-terminal HD domain of Cas10. Csm with a precursor crRNA does not include Csm5, while Cas6, the enzyme probably involved in pre-crRNA processing, is found associated with a subset of the Csm complex.

Functionally, CRISPR (clustered regularly interspaced short palindromic repeat) is an adaptive immune system that provides protection against mobile genetic elements (viruses, transposable elements and conjugative plasmids). CRISPR clusters contain spacers, sequences complementary to antecedent mobile elements, and target invading nucleic acids. CRISPR clusters are transcribed and processed into CRISPR RNA (crRNA). The type III-A Csm effector complex binds crRNA and acts as a crRNA-guided RNase, DNase and cyclic oligoadenylate synthase; binding of target RNA cognate to the crRNA is required for all activities. In a heterologous host this Csm effector complex restricts ssRNA phage MS2, suggesting it may target RNA viruses in vivo. Its function is as follows. Csm functions as a non-specific ssDNase. Base-pairing between crRNA and target RNA to form a ternary Csm complex activates a ssDNase activity; target RNA cleavage suppresses the ssDNase, a temporal control that prevents uncontrolled DNA degradation. Viral RNA transcripts probably tether the Csm complex to the viral genome, recruiting Cas10 ssDNA activity which is able to degrade DNA in the transcription bubble, spatially controlling the DNase activity. In terms of biological role, this subunit may be involved in monitoring complementarity of crRNA and target RNA. The polypeptide is CRISPR system Cms protein Csm2 (Streptococcus thermophilus).